The sequence spans 636 residues: ABC transporter ATP-binding protein RamA (636 aa).

5 helical membrane-spanning segments follow: residues 45-65 (VLVLLCSVAAAVAAVAQPLAL), 78-98 (AGWWLPLSAALLLGELLLDSA), 175-195 (LVDVWVALCVLTGLPALALLL), 269-289 (GVLVPLLTLAATAVGGLRLAA), and 297-317 (LLAVGRYAQLTAGVGAAASLL). Residues 45-322 (VLVLLCSVAA…AASLLGAIVR (278 aa)) enclose the ABC transmembrane type-1 domain. One can recognise an ABC transporter domain in the interval 354-585 (LRLCGVRVLR…AGYREVFGAG (232 aa)). 386-393 (GRSGAGKS) contacts ATP. Over residues 589–606 (GAGAGAGAGADAGAGADA) the composition is skewed to gly residues. Residues 589–636 (GAGAGAGAGADAGAGADAGPGPDSGAATAVGGSGPGPVRRPEPEEARP) form a disordered region. The segment covering 607–618 (GPGPDSGAATAV) has biased composition (low complexity). The span at 627–636 (RRPEPEEARP) shows a compositional bias: basic and acidic residues.

Belongs to the ABC transporter superfamily.

It is found in the cell membrane. Probably involved in exporting SapB from the cell. Expression of the ram locus (ramA, ramB and ramR) induces rapid aerial mycelium formation in S.lividans. This Streptomyces coelicolor (strain ATCC BAA-471 / A3(2) / M145) protein is ABC transporter ATP-binding protein RamA.